A 214-amino-acid chain; its full sequence is Putative pyrophosphatase PpaX (214 aa).

Aspartate 8 (nucleophile) is an active-site residue.

The protein belongs to the HAD-like hydrolase superfamily. PpaX family. Requires Mg(2+) as cofactor.

It catalyses the reaction diphosphate + H2O = 2 phosphate + H(+). The chain is Putative pyrophosphatase PpaX from Clostridium perfringens (strain 13 / Type A).